Consider the following 766-residue polypeptide: Tetratricopeptide repeat protein 14 (766 aa).

The disordered stretch occupies residues 35 to 55; sequence LGTAAEPARGAAPPPGAGRKE. Residues 125–207 enclose the S1 motif domain; it reads GDIVIGRISS…YHEKLAVSLY (83 aa). TPR repeat units lie at residues 209–242, 306–339, 341–373, and 381–414; these read SSLP…NSNS, ALKC…DKQN, EALV…CPTH, and CQTL…DETF. The disordered stretch occupies residues 463–743; it reads EEKRLKKKRR…PDSRVKKNLP (281 aa). The segment covering 475 to 496 has biased composition (low complexity); that stretch reads SSSSSVSSADESVSSSSSSSSS. The span at 497–506 shows a compositional bias: basic residues; it reads SHKRHKKSKR. Residues 539-550 show a composition bias toward polar residues; it reads PTNTSASFLNQK. Residues 551–562 are compositionally biased toward basic and acidic residues; that stretch reads QEVEKLLEKQDR. The span at 594 to 605 shows a compositional bias: polar residues; that stretch reads FYNSYKTQAGSS. 2 stretches are compositionally biased toward basic and acidic residues: residues 606 to 616 and 629 to 657; these read KTEKPYKSERH and NSED…RRWE. The segment covering 661–673 has biased composition (polar residues); that stretch reads VKYSTSPASSDYS. Phosphoserine is present on Ser-666. Over residues 707-738 the composition is skewed to basic and acidic residues; it reads RVYEKEDSCGEGNRNEAPEEMLNSKEQPDSRV.

This sequence belongs to the TTC14 family.

The sequence is that of Tetratricopeptide repeat protein 14 from Mus musculus (Mouse).